We begin with the raw amino-acid sequence, 152 residues long: UPF0178 protein Shewmr7_1635 (152 aa).

It belongs to the UPF0178 family.

In Shewanella sp. (strain MR-7), this protein is UPF0178 protein Shewmr7_1635.